The sequence spans 273 residues: uncharacterized protein (273 aa).

In terms of domain architecture, AB hydrolase-1 spans 29–131 (TLVCVHGFLS…VVLLCSSGYL (103 aa)). Active-site residues include serine 102 and histidine 254.

This sequence belongs to the DmpD/TodF/XylF esterase family.

This is an uncharacterized protein from Bacillus subtilis (strain 168).